A 701-amino-acid polypeptide reads, in one-letter code: Pseudouridylate synthase PUS7L (701 aa).

Residue Ser79 is modified to Phosphoserine. The Nucleophile role is filled by Asp339. Residues 424-647 form the TRUD domain; it reads GFVNYYGPQR…PGCYRQILKH (224 aa).

This sequence belongs to the pseudouridine synthase TruD family.

The catalysed reaction is a uridine in mRNA = a pseudouridine in mRNA. Its function is as follows. Pseudouridine synthase that catalyzes pseudouridylation of mRNAs. This Homo sapiens (Human) protein is Pseudouridylate synthase PUS7L.